The following is a 222-amino-acid chain: Flagellar L-ring protein (222 aa).

The N-terminal stretch at 1-18 (MRRPGAAALAAAALALAG) is a signal peptide. The N-palmitoyl cysteine moiety is linked to residue Cys-19. Cys-19 carries S-diacylglycerol cysteine lipidation.

The protein belongs to the FlgH family. The basal body constitutes a major portion of the flagellar organelle and consists of four rings (L,P,S, and M) mounted on a central rod.

It is found in the cell outer membrane. The protein localises to the bacterial flagellum basal body. Its function is as follows. Assembles around the rod to form the L-ring and probably protects the motor/basal body from shearing forces during rotation. The sequence is that of Flagellar L-ring protein from Burkholderia mallei (strain ATCC 23344).